The following is a 715-amino-acid chain: Bromodomain-containing protein DDB_G0278469 (715 aa).

2 disordered regions span residues 18-46 (EDNN…NRNA) and 186-425 (QQQK…ETKQ). 5 stretches are compositionally biased toward low complexity: residues 20–45 (NNNN…PNRN), 186–204 (QQQK…PTAQ), 215–227 (LTAA…TTTT), 234–254 (TAPP…TTKK), and 261–281 (SKSN…TTIT). Positions 307 to 316 (KPKEQKKDIM) are enriched in basic and acidic residues. The stretch at 322–368 (SKKANTHEEKEEGESEEEEEEEEEEEEEEEEEEEEEQLEDKQKQTKT) forms a coiled coil. Residues 332–359 (EEGESEEEEEEEEEEEEEEEEEEEEEQL) show a composition bias toward acidic residues. Polar residues predominate over residues 366-389 (TKTPISQNKSASSNIKPLSKTSKS). Residues 405–414 (KKITSTTVTR) show a composition bias toward low complexity. Positions 437 to 470 (KQQTQEEIEQELKLESIRKRIEQFINKFEKEIND) form a coiled coil. The 126-residue stretch at 474 to 599 (KDLDEGKRKI…IQFYKSLLET (126 aa)) folds into the Bromo domain. The interval 653 to 715 (LVDEDEDECL…SEEEDQEATN (63 aa)) is disordered. Over residues 662-672 (LNNQNNPTTYD) the composition is skewed to polar residues. Acidic residues predominate over residues 684 to 715 (QESDEESDEESDEESDEERDQLSEEEDQEATN).

In Dictyostelium discoideum (Social amoeba), this protein is Bromodomain-containing protein DDB_G0278469.